The primary structure comprises 426 residues: 26S proteasome regulatory subunit 7B (426 aa).

Position 209-216 (209-216) interacts with ATP; it reads GPPGTGKT.

Belongs to the AAA ATPase family.

The protein resides in the cytoplasm. It is found in the nucleus. Its function is as follows. The 26S proteasome is involved in the ATP-dependent degradation of ubiquitinated proteins. The regulatory (or ATPase) complex confers ATP dependency and substrate specificity to the 26S complex. The polypeptide is 26S proteasome regulatory subunit 7B (RPT1B) (Oryza sativa subsp. japonica (Rice)).